The following is a 1274-amino-acid chain: Clustered mitochondria protein homolog (1274 aa).

Positions 1 to 53 (MAQTNGELEHSKGMSSPAVRISQAQKSTKLTVDPESPEQVANGTHAEGEQPEE) are disordered. TPR repeat units lie at residues 293–326 (SPSF…PNNP), 510–543 (DYGG…KKHP), and 628–661 (AKEA…ERVD). Residues 342 to 586 (DITRSQENYL…RVTPLDVMWQ (245 aa)) enclose the Clu domain. 2 disordered regions span residues 631–655 (AAKK…EEAL) and 893–925 (VSNG…ARAA). TPR repeat units follow at residues 998–1031 (AKLY…TERT), 1040–1073 (ILSY…WKII), 1082–1115 (ITTM…CESL), and 1124–1157 (ATIL…FLQQ). Positions 1197-1274 (INMTPRTLGT…KLRGSKKSSA (78 aa)) are disordered. Residues 1200-1217 (TPRTLGTRVQPQVGQTAP) are compositionally biased toward polar residues.

The protein belongs to the CLU family. In terms of assembly, may associate with the eukaryotic translation initiation factor 3 (eIF-3) complex.

The protein localises to the cytoplasm. Functionally, mRNA-binding protein involved in proper cytoplasmic distribution of mitochondria. This chain is Clustered mitochondria protein homolog, found in Aspergillus terreus (strain NIH 2624 / FGSC A1156).